The primary structure comprises 237 residues: Ribonuclease PH (237 aa).

Residues Arg-86 and 124 to 126 (GTR) each bind phosphate.

The protein belongs to the RNase PH family. In terms of assembly, homohexameric ring arranged as a trimer of dimers.

It catalyses the reaction tRNA(n+1) + phosphate = tRNA(n) + a ribonucleoside 5'-diphosphate. Its function is as follows. Phosphorolytic 3'-5' exoribonuclease that plays an important role in tRNA 3'-end maturation. Removes nucleotide residues following the 3'-CCA terminus of tRNAs; can also add nucleotides to the ends of RNA molecules by using nucleoside diphosphates as substrates, but this may not be physiologically important. Probably plays a role in initiation of 16S rRNA degradation (leading to ribosome degradation) during starvation. The protein is Ribonuclease PH of Alteromonas mediterranea (strain DSM 17117 / CIP 110805 / LMG 28347 / Deep ecotype).